The primary structure comprises 255 residues: tRNA pseudouridine synthase B (255 aa).

D58 acts as the Nucleophile in catalysis.

It belongs to the pseudouridine synthase TruB family. Type 1 subfamily.

It carries out the reaction uridine(55) in tRNA = pseudouridine(55) in tRNA. In terms of biological role, responsible for synthesis of pseudouridine from uracil-55 in the psi GC loop of transfer RNAs. This is tRNA pseudouridine synthase B from Chlorobium chlorochromatii (strain CaD3).